We begin with the raw amino-acid sequence, 284 residues long: Proline-rich protein 32 (284 aa).

Disordered stretches follow at residues 59–80, 97–119, and 143–171; these read RPPF…APRH, EINS…NMSQ, and SGNN…RGPP.

The polypeptide is Proline-rich protein 32 (Prr32) (Mus musculus (Mouse)).